The primary structure comprises 990 residues: Protein argonaute 7 (990 aa).

The segment covering 1-13 (MEEKTHHHHHSTN) has biased composition (basic residues). The tract at residues 1 to 25 (MEEKTHHHHHSTNKHIPSSKSRTPL) is disordered. Positions 379-484 (EFLTDLPRNK…LPMELCMICE (106 aa)) constitute a PAZ domain. The Piwi domain occupies 649–950 (LIICVMEKKH…AAYRGRLYIE (302 aa)). The tract at residues 953–973 (SESNGGSMNPSSVSRVGPPKT) is disordered. The segment covering 954–966 (ESNGGSMNPSSVS) has biased composition (polar residues).

It belongs to the argonaute family. Ago subfamily. In terms of tissue distribution, expressed in leaves and floral buds, and at low levels in roots.

Involved in RNA-mediated post-transcriptional gene silencing (PTGS). Main component of the RNA-induced silencing complex (RISC) that binds to a short guide RNA such as a microRNA (miRNA) or small interfering RNA (siRNA). RISC uses the mature miRNA or siRNA as a guide for slicer-directed cleavage of homologous mRNAs to repress gene expression. Required for the processing of 21 nucleotide trans-acting siRNAs (ta-siRNAs) derived from TAS3a transcripts. Associates preferentially with the microRNA (miRNA) miR390 which guides the cleavage of TAS3 precursor RNA. Seems to act as miR390 specific slicer. Associates mainly with small RNAs of 21 nucleotide in length and with a 5' terminal adenosine. Acts in the RDR6/SGS3/DCL4/AGO7 trans-acting siRNA pathway involved in leaf developmental timing. Does not seem to act on leaf polarity. Required for the production of the 30-40nt bacterial-induced long siRNAs (lsiRNA). Involved in antiviral RNA silencing by contributing to efficient viral RNAs clearance. Targets less structured viral RNAs than AGO1 which is capable of targeting RNAs with more compact structures. This Arabidopsis thaliana (Mouse-ear cress) protein is Protein argonaute 7 (AGO7).